We begin with the raw amino-acid sequence, 456 residues long: Histidine--tRNA ligase (456 aa).

Belongs to the class-II aminoacyl-tRNA synthetase family. In terms of assembly, homodimer.

The protein resides in the cytoplasm. The enzyme catalyses tRNA(His) + L-histidine + ATP = L-histidyl-tRNA(His) + AMP + diphosphate + H(+). In Borreliella burgdorferi (strain ATCC 35210 / DSM 4680 / CIP 102532 / B31) (Borrelia burgdorferi), this protein is Histidine--tRNA ligase (hisS).